The chain runs to 815 residues: G-type lectin S-receptor-like serine/threonine-protein kinase SD1-1 (815 aa).

A signal peptide spans 1-22; it reads MREIHSLFSLSLFLISSSLSVA. At 23–438 the chain is on the extracellular side; the sequence is LDYNVITPKE…FAKIEFKGRE (416 aa). One can recognise a Bulb-type lectin domain in the interval 25-152; it reads YNVITPKEFL…EEAVLWQSFD (128 aa). Residues asparagine 93, asparagine 249, and asparagine 265 are each glycosylated (N-linked (GlcNAc...) asparagine). In terms of domain architecture, EGF-like spans 288 to 326; sequence PEDECDYYSICGAYAVCGINSKNTPSCSCLQGFKPKSGR. 2 cysteine pairs are disulfide-bonded: cysteine 292–cysteine 304 and cysteine 298–cysteine 314. Asparagine 329 and asparagine 385 each carry an N-linked (GlcNAc...) asparagine glycan. The PAN domain maps to 345-428; that stretch reads CEKKDAFVKF…FGQDVYIRMG (84 aa). 2 disulfides stabilise this stretch: cysteine 378–cysteine 403 and cysteine 382–cysteine 388. A helical membrane pass occupies residues 439–459; the sequence is VVGMVVGSVVAIAVVLVVVFA. The Cytoplasmic segment spans residues 460-815; it reads CFRKKIMKRY…EVSITMLQGR (356 aa). The Protein kinase domain maps to 500 to 783; sequence FSYVNFLGRG…SDSSLPHPTQ (284 aa). ATP-binding positions include 506–514 and lysine 528; that span reads LGRGGFGPV. At serine 534 the chain carries Phosphoserine. Residues 589–606 form a caM-binding region; sequence RRSTELDWKKRMNIINGV. Residue aspartate 625 is the Proton acceptor of the active site. The residue at position 642 (serine 642) is a Phosphoserine. Threonine 659 carries the phosphothreonine modification. Phosphoserine is present on residues serine 797 and serine 803. Phosphothreonine is present on threonine 810.

Belongs to the protein kinase superfamily. Ser/Thr protein kinase family. As to quaternary structure, interacts with PUB9, PUB13 and PUB14.

It is found in the cell membrane. It catalyses the reaction L-seryl-[protein] + ATP = O-phospho-L-seryl-[protein] + ADP + H(+). The enzyme catalyses L-threonyl-[protein] + ATP = O-phospho-L-threonyl-[protein] + ADP + H(+). In Arabidopsis thaliana (Mouse-ear cress), this protein is G-type lectin S-receptor-like serine/threonine-protein kinase SD1-1 (SD11).